The sequence spans 387 residues: Anhydro-N-acetylmuramic acid kinase (387 aa).

17-24 (GTSMDGVD) is a binding site for ATP.

This sequence belongs to the anhydro-N-acetylmuramic acid kinase family.

The enzyme catalyses 1,6-anhydro-N-acetyl-beta-muramate + ATP + H2O = N-acetyl-D-muramate 6-phosphate + ADP + H(+). It functions in the pathway amino-sugar metabolism; 1,6-anhydro-N-acetylmuramate degradation. It participates in cell wall biogenesis; peptidoglycan recycling. In terms of biological role, catalyzes the specific phosphorylation of 1,6-anhydro-N-acetylmuramic acid (anhMurNAc) with the simultaneous cleavage of the 1,6-anhydro ring, generating MurNAc-6-P. Is required for the utilization of anhMurNAc either imported from the medium or derived from its own cell wall murein, and thus plays a role in cell wall recycling. The sequence is that of Anhydro-N-acetylmuramic acid kinase from Burkholderia mallei (strain ATCC 23344).